A 106-amino-acid chain; its full sequence is Large ribosomal subunit protein eL42 (106 aa).

Residues 34-53 (YAQGRRRYDRKRSGYGGQTK) are disordered. The residue at position 53 (lysine 53) is an N6-methyllysine.

The protein belongs to the eukaryotic ribosomal protein eL42 family.

The protein resides in the cytoplasm. In Pongo abelii (Sumatran orangutan), this protein is Large ribosomal subunit protein eL42 (RPL36AL).